Reading from the N-terminus, the 135-residue chain is Cystatin-1 (135 aa).

A signal peptide spans 1 to 24 (MRKHRIVSLVAALLVLLALAAVSS). Positions 86-90 (QVVAG) match the Secondary area of contact motif.

Belongs to the cystatin family. Phytocystatin subfamily.

The chain is Cystatin-1 (RAMDAZC7) from Zea mays (Maize).